The primary structure comprises 334 residues: Phospho-N-acetylmuramoyl-pentapeptide-transferase (334 aa).

The next 10 helical transmembrane spans lie at I2–V22, V55–V75, G78–M98, E116–L136, G154–A174, G187–M207, W211–F231, V236–I256, F262–I282, and V311–K331.

Belongs to the glycosyltransferase 4 family. MraY subfamily. Mg(2+) is required as a cofactor.

It localises to the cell membrane. It carries out the reaction UDP-N-acetyl-alpha-D-muramoyl-L-alanyl-gamma-D-glutamyl-meso-2,6-diaminopimeloyl-D-alanyl-D-alanine + di-trans,octa-cis-undecaprenyl phosphate = di-trans,octa-cis-undecaprenyl diphospho-N-acetyl-alpha-D-muramoyl-L-alanyl-D-glutamyl-meso-2,6-diaminopimeloyl-D-alanyl-D-alanine + UMP. It participates in cell wall biogenesis; peptidoglycan biosynthesis. Functionally, catalyzes the initial step of the lipid cycle reactions in the biosynthesis of the cell wall peptidoglycan: transfers peptidoglycan precursor phospho-MurNAc-pentapeptide from UDP-MurNAc-pentapeptide onto the lipid carrier undecaprenyl phosphate, yielding undecaprenyl-pyrophosphoryl-MurNAc-pentapeptide, known as lipid I. The sequence is that of Phospho-N-acetylmuramoyl-pentapeptide-transferase from Desulforudis audaxviator (strain MP104C).